Reading from the N-terminus, the 367-residue chain is Chorismate synthase (367 aa).

Residues R48 and R54 each coordinate NADP(+). FMN contacts are provided by residues 125 to 127, 238 to 239, G278, 293 to 297, and R319; these read RSS, NA, and KPTSS.

Belongs to the chorismate synthase family. As to quaternary structure, homotetramer. FMNH2 serves as cofactor.

The catalysed reaction is 5-O-(1-carboxyvinyl)-3-phosphoshikimate = chorismate + phosphate. Its pathway is metabolic intermediate biosynthesis; chorismate biosynthesis; chorismate from D-erythrose 4-phosphate and phosphoenolpyruvate: step 7/7. In terms of biological role, catalyzes the anti-1,4-elimination of the C-3 phosphate and the C-6 proR hydrogen from 5-enolpyruvylshikimate-3-phosphate (EPSP) to yield chorismate, which is the branch point compound that serves as the starting substrate for the three terminal pathways of aromatic amino acid biosynthesis. This reaction introduces a second double bond into the aromatic ring system. The polypeptide is Chorismate synthase (Xanthomonas campestris pv. campestris (strain 8004)).